The chain runs to 217 residues: tRNA (guanine-N(7)-)-methyltransferase (217 aa).

Residues E43, D68, N101, and N123 each coordinate S-adenosyl-L-methionine. K127 provides a ligand contact to substrate. Residues 129–134 (RHNKRR) are interaction with RNA. Substrate-binding positions include D159 and 196-199 (TEYE).

The protein belongs to the class I-like SAM-binding methyltransferase superfamily. TrmB family.

It catalyses the reaction guanosine(46) in tRNA + S-adenosyl-L-methionine = N(7)-methylguanosine(46) in tRNA + S-adenosyl-L-homocysteine. It functions in the pathway tRNA modification; N(7)-methylguanine-tRNA biosynthesis. Its function is as follows. Catalyzes the formation of N(7)-methylguanine at position 46 (m7G46) in tRNA. This Clostridium botulinum (strain Loch Maree / Type A3) protein is tRNA (guanine-N(7)-)-methyltransferase.